Here is a 492-residue protein sequence, read N- to C-terminus: Catalase (492 aa).

Catalysis depends on residues H65 and N138. Y348 is a heme binding site.

This sequence belongs to the catalase family. As to quaternary structure, homotetramer. Heme is required as a cofactor. In stems, leaves, roots and developing fruits.

The protein resides in the cytoplasm. It is found in the cytosol. Its subcellular location is the peroxisome matrix. The enzyme catalyses 2 H2O2 = O2 + 2 H2O. Its function is as follows. Catalyzes the degradation of hydrogen peroxide (H(2)O(2)) generated by peroxisomal oxidases to water and oxygen, thereby protecting cells from the toxic effects of hydrogen peroxide. The sequence is that of Catalase (CAT) from Capsicum annuum (Capsicum pepper).